A 401-amino-acid polypeptide reads, in one-letter code: Phosrestin-1 (401 aa).

The protein belongs to the arrestin family. As to expression, inner and outer segments, and the inner plexiform regions of the retina.

In terms of biological role, undergoes light-induced phosphorylation, probably plays an important role in the photoreceptor transduction. This chain is Phosrestin-1 (Arr2), found in Drosophila miranda (Fruit fly).